Consider the following 41-residue polypeptide: Virescein (41 aa).

The residue at position 41 (His-41) is a Histidine amide.

As to quaternary structure, monomer. As to expression, hemolymph.

It is found in the secreted. Has antibacterial activity against Gram-positive and Gram-negative bacteria. This is Virescein from Heliothis virescens (Tobacco budworm moth).